Reading from the N-terminus, the 65-residue chain is Large ribosomal subunit protein uL29 (65 aa).

Positions E30 to I49 are disordered.

This sequence belongs to the universal ribosomal protein uL29 family.

The polypeptide is Large ribosomal subunit protein uL29 (Picrophilus torridus (strain ATCC 700027 / DSM 9790 / JCM 10055 / NBRC 100828 / KAW 2/3)).